The following is a 526-amino-acid chain: MARLSLLTLLALGSAALAKKDTFQTKCAALQHKVKLPNVHVNFVEYVPGGTNLDLPDNAPSCGASSQAVSTDMCRIAMAVDTSDSSQITLEAWFPRDYTGRFLSTGNGGLSGCIQYYDLAYAAGLGFATVGANNGHNGTSGEPFYQHPEVVEDFAHRSVHTGVVVGKQLTKLFYDKGFKKSYYLGCSTGGRQGFKSVQKYPKDFDGIVAGAPAFNFVNLISWSAYFYSLTGSNTSESYLSPAMWKIAHDEIVRQCDELDGAKDGIIEDTDLCHPRLETIICKPGAKDTANCLTGAQAKTVRDVLSPMYGVNGTLLYPRMQPGSEVYAAGIMYNGEPFQYSTDWYRYVVYNNPDWDDTKWSVEDAAAALAQNPYDIQTFDADISSFRGAGGKVLTYHGLQDQMISSDNSKLYYARVAETMKLPPSELDEFYRFFPVSGMTHCAGGDGAYGIGNGLGSYNGVDPENNVLMAMVQWVEKGIAPEFIRGAKFAEGPGSAVEYTRKHCRYPRRNVYKGPGNYTDENAWECV.

The signal sequence occupies residues 1–18 (MARLSLLTLLALGSAALA). 2 disulfides stabilise this stretch: C27–C74 and C62–C113. N-linked (GlcNAc...) asparagine glycosylation is present at N137. 4 cysteine pairs are disulfide-bonded: C186–C441, C255–C272, C281–C291, and C503–C525. S187 (acyl-ester intermediate) is an active-site residue. N233 is a glycosylation site (N-linked (GlcNAc...) asparagine). Residues D256, D259, A261, D263, and I265 each contribute to the Ca(2+) site. N311 carries N-linked (GlcNAc...) asparagine glycosylation. Catalysis depends on charge relay system residues D400 and H440. N516 carries an N-linked (GlcNAc...) asparagine glycan.

This sequence belongs to the tannase family.

It localises to the secreted. It catalyses the reaction feruloyl-polysaccharide + H2O = ferulate + polysaccharide.. Involved in degradation of plant cell walls. Hydrolyzes the feruloyl-arabinose ester bond in arabinoxylans as well as the feruloyl-galactose and feruloyl-arabinose ester bonds in pectin. The protein is Probable feruloyl esterase B (faeB) of Aspergillus clavatus (strain ATCC 1007 / CBS 513.65 / DSM 816 / NCTC 3887 / NRRL 1 / QM 1276 / 107).